The following is a 141-amino-acid chain: Hemoglobin subunit alpha-A (141 aa).

The Globin domain maps to 1-141 (VLSSHDKSNV…VGTVLTAKYR (141 aa)). His-58 contacts O2. Residue His-87 participates in heme b binding.

It belongs to the globin family. As to quaternary structure, heterotetramer of two alpha chains and two beta chains. As to expression, red blood cells.

In terms of biological role, involved in oxygen transport from the lung to the various peripheral tissues. The sequence is that of Hemoglobin subunit alpha-A (HBAA) from Phoenicopterus ruber (American flamingo).